Here is a 1276-residue protein sequence, read N- to C-terminus: Sterol regulatory element-binding protein cleavage-activating protein (1276 aa).

At 1–18 the chain is on the cytoplasmic side; it reads MTLTERLREKISQAFYNH. The helical transmembrane segment at 19–39 threads the bilayer; sequence GLLCASYPIPIILFTGLCILA. Residues 40-279 are Lumenal-facing; it reads CCYPLLKLPL…NLVHVHFKEE (240 aa). The interval 46–284 is loop-1; that stretch reads KLPLPGTGPV…HFKEEIGIAE (239 aa). Positions 60-81 are disordered; that stretch reads PVKGYSPPPADSDHKQGEPSEQ. Asparagine 263 carries N-linked (GlcNAc...) asparagine glycosylation. The chain crosses the membrane as a helical span at residues 280 to 300; that stretch reads IGIAELIPLVTTYIILFAYIY. An SSD domain is found at 284 to 442; that stretch reads ELIPLVTTYI…MLFFTTVLSI (159 aa). Residues 301–312 lie on the Cytoplasmic side of the membrane; it reads FSTRKIDMVKSK. A helical membrane pass occupies residues 313–333; sequence WGLALAAVVTVLSSLLMSVGL. At 334 to 344 the chain is on the lumenal side; that stretch reads CTLFGLTPTLN. Residues 345 to 365 form a helical membrane-spanning segment; the sequence is GGEIFPYLVVVIGLENVLVLT. Over 366–401 the chain is Cytoplasmic; the sequence is KSVVSTPVDLEVKLRIAQGLSSESWSIMKNVATELG. A helical membrane pass occupies residues 402 to 422; the sequence is IILIGYFTLVPAIQEFCLFAV. Valine 423 is a topological domain (lumenal). Residues 424–444 form a helical membrane-spanning segment; sequence GLVSDFFLQMLFFTTVLSIDI. Residues 445 to 518 lie on the Cytoplasmic side of the membrane; it reads RRMELADLNK…FLARTRLAQR (74 aa). The ER export signal motif lies at 447–452; it reads MELADL. Residues lysine 454 and lysine 466 each participate in a glycyl lysine isopeptide (Lys-Gly) (interchain with G-Cter in ubiquitin) cross-link. The helical transmembrane segment at 519 to 539 threads the bilayer; sequence LIMAGTVVWIGILVYTDPAGL. Residues 535-710 form a loop-7 region; that stretch reads DPAGLRTYLA…QTHGDITLYK (176 aa). Residues 540 to 707 are Lumenal-facing; sequence RTYLAAQVTE…GGTQTHGDIT (168 aa). Residues asparagine 590 and asparagine 641 are each glycosylated (N-linked (GlcNAc...) asparagine). The chain crosses the membrane as a helical span at residues 708–728; the sequence is LYKVAALGLAAGIVLVLLLLC. Topologically, residues 729–1276 are cytoplasmic; sequence LYRVLCPRNY…YVPSVLEKLD (548 aa). Positions 731–1276 are interaction with SREBF2; the sequence is RVLCPRNYGQ…YVPSVLEKLD (546 aa). Residues 771–811 form a WD 1 repeat; sequence VLRGHLMDIECLASDGMLLVSCCLAGQVCVWDAQTGDCLTR. Phosphoserine is present on residues serine 821, serine 837, serine 843, serine 850, serine 905, and serine 934. Positions 834 to 903 are disordered; sequence ERLSDGGKAS…RHRAGCGRSR (70 aa). The segment at 928-958 is disordered; the sequence is SALRPPSPGPPLPQASQEEGTAPEKGSPPLA. 2 WD repeats span residues 949-999 and 1002-1039; these read APEK…LCCS and EISS…SLSP. Arginine 1048 is modified (omega-N-methylarginine). WD repeat units follow at residues 1074–1111, 1114–1152, 1155–1192, and 1194–1232; these read AHQK…CLFT, GHSG…RVSH, AHRG…KLYS, and QQDL…LLQT.

This sequence belongs to the WD repeat SCAP family. As to quaternary structure, membrane region forms a homotetramer. Component of the SCAP-SREBP complex (composed of SCAP and SREBF1/SREBP1 or SREBF2/SREBP2); interacts with SREBF1/SREBP1 or SREBF2/SREBP2 through its C-terminal cytoplasmic domain. Forms a ternary complex with INSIG1 or INSIG2 through its transmembrane domains at high sterol concentrations. Interacts with PAQR3; the interaction anchors the SCAP-SREBP complex to the Golgi apparatus in low cholesterol conditions. Interacts with the SEC23-SEC24 complex in a SAR1-GTP-dependent manner through an ER export signal in its third cytoplasmic loop. Interacts with RNF139; the interaction inhibits the interaction of SCAP with SEC24B and hampering the ER to Golgi transport of the SCAP-SREBP complex. Interacts with SPRING1. In terms of processing, ubiquitinated at Lys-454 and Lys-466. RNF145 triggers ubiquitination of SCAP, likely inhibiting SCAP-SREBP complex transport to the Golgi apparatus and the subsequent processing/maturation of SREBF2/SREBP2.

The protein resides in the endoplasmic reticulum membrane. The protein localises to the golgi apparatus membrane. Its subcellular location is the cytoplasmic vesicle. It is found in the COPII-coated vesicle membrane. Escort protein required for cholesterol as well as lipid homeostasis. Regulates export of the SCAP-SREBP complex from the endoplasmic reticulum to the Golgi upon low cholesterol, thereby regulating the processing of sterol regulatory element-binding proteins (SREBPs) SREBF1/SREBP1 and SREBF2/SREBP2. At high sterol concentrations, formation of a ternary complex with INSIG (INSIG1 or INSIG2) leads to mask the ER export signal in SCAP, promoting retention of the complex in the endoplasmic reticulum. Low sterol concentrations trigger release of INSIG, a conformational change in the SSD domain of SCAP, unmasking of the ER export signal, promoting recruitment into COPII-coated vesicles and transport of the SCAP-SREBP to the Golgi: in the Golgi, SREBPs are then processed, releasing the transcription factor fragment of SREBPs from the membrane, its import into the nucleus and up-regulation of LDLR, INSIG1 and the mevalonate pathway. Binds cholesterol via its SSD domain. The sequence is that of Sterol regulatory element-binding protein cleavage-activating protein from Rattus norvegicus (Rat).